A 48-amino-acid chain; its full sequence is Osteocalcin (48 aa).

One can recognise a Gla domain in the interval 1–44; that stretch reads AGTAPADLTVAQLESLKEVCEANLACEHMMDVSGIIAAYTAYYG. 4 residues coordinate Ca(2+): Glu-14, Glu-18, Glu-21, and Glu-27. 4-carboxyglutamate is present on residues Glu-14, Glu-18, and Glu-21. A disulfide bridge connects residues Cys-20 and Cys-26.

It belongs to the osteocalcin/matrix Gla protein family. Gamma-carboxyglutamate residues are formed by vitamin K dependent carboxylation by GGCX. These residues are essential for the binding of calcium.

It is found in the secreted. Its subcellular location is the extracellular space. It localises to the extracellular matrix. Its function is as follows. The carboxylated form is one of the main organic components of the bone matrix, which constitutes 1-2% of the total bone protein. The carboxylated form binds strongly to apatite and calcium. The chain is Osteocalcin (bglap) from Cyprinus carpio (Common carp).